Consider the following 208-residue polypeptide: Transmembrane protein 222 (208 aa).

Positions 1–34 (MAEAEGSSPLLLQPPPPPPRMAEVETPTGAETDM) are disordered. The Extracellular portion of the chain corresponds to 1–55 (MAEAEGSSPLLLQPPPPPPRMAEVETPTGAETDMKQYHGSGGVVMDVERSRFPYC). A helical transmembrane segment spans residues 56 to 76 (VVWTPIPVLTWFFPIIGHMGI). At 77-164 (CTSAGVIRDF…MRYNNSTNWN (88 aa)) the chain is on the cytoplasmic side. A helical transmembrane segment spans residues 165–185 (MVTLCCFCLIYGKYVSVGAFV). Lys-186 is a topological domain (extracellular). The chain crosses the membrane as a helical span at residues 187-207 (TWLPFVLLLGIILTVSLVFNL). Residue Arg-208 is a topological domain, cytoplasmic.

It localises to the membrane. It is found in the cell projection. The protein localises to the dendrite. In Mus musculus (Mouse), this protein is Transmembrane protein 222 (Tmem222).